Consider the following 117-residue polypeptide: Large ribosomal subunit protein uL18 (117 aa).

Belongs to the universal ribosomal protein uL18 family. Part of the 50S ribosomal subunit; part of the 5S rRNA/L5/L18/L25 subcomplex. Contacts the 5S and 23S rRNAs.

Its function is as follows. This is one of the proteins that bind and probably mediate the attachment of the 5S RNA into the large ribosomal subunit, where it forms part of the central protuberance. The polypeptide is Large ribosomal subunit protein uL18 (Vibrio proteolyticus (Aeromonas proteolytica)).